The sequence spans 465 residues: Siroheme synthase (465 aa).

Positions 1 to 203 (MEYLPLFHNL…GRTAEAERLL (203 aa)) are precorrin-2 dehydrogenase /sirohydrochlorin ferrochelatase. NAD(+) is bound by residues 22–23 (EI) and 43–44 (PS). Position 128 is a phosphoserine (Ser128). Residues 216 to 465 (GEVYLVGAGP…WFEGAQAAGR (250 aa)) form a uroporphyrinogen-III C-methyltransferase region. Pro225 contacts S-adenosyl-L-methionine. Catalysis depends on Asp248, which acts as the Proton acceptor. Lys270 functions as the Proton donor in the catalytic mechanism. S-adenosyl-L-methionine contacts are provided by residues 301–303 (GGD), Ile306, 331–332 (TA), Met383, and Gly412.

In the N-terminal section; belongs to the precorrin-2 dehydrogenase / sirohydrochlorin ferrochelatase family. This sequence in the C-terminal section; belongs to the precorrin methyltransferase family.

It carries out the reaction uroporphyrinogen III + 2 S-adenosyl-L-methionine = precorrin-2 + 2 S-adenosyl-L-homocysteine + H(+). It catalyses the reaction precorrin-2 + NAD(+) = sirohydrochlorin + NADH + 2 H(+). The catalysed reaction is siroheme + 2 H(+) = sirohydrochlorin + Fe(2+). The protein operates within cofactor biosynthesis; adenosylcobalamin biosynthesis; precorrin-2 from uroporphyrinogen III: step 1/1. It participates in cofactor biosynthesis; adenosylcobalamin biosynthesis; sirohydrochlorin from precorrin-2: step 1/1. It functions in the pathway porphyrin-containing compound metabolism; siroheme biosynthesis; precorrin-2 from uroporphyrinogen III: step 1/1. Its pathway is porphyrin-containing compound metabolism; siroheme biosynthesis; siroheme from sirohydrochlorin: step 1/1. The protein operates within porphyrin-containing compound metabolism; siroheme biosynthesis; sirohydrochlorin from precorrin-2: step 1/1. Its function is as follows. Multifunctional enzyme that catalyzes the SAM-dependent methylations of uroporphyrinogen III at position C-2 and C-7 to form precorrin-2 via precorrin-1. Then it catalyzes the NAD-dependent ring dehydrogenation of precorrin-2 to yield sirohydrochlorin. Finally, it catalyzes the ferrochelation of sirohydrochlorin to yield siroheme. This chain is Siroheme synthase, found in Stutzerimonas stutzeri (strain A1501) (Pseudomonas stutzeri).